Here is a 433-residue protein sequence, read N- to C-terminus: MSTEKFTITEHLVPGSHIREYPGSTVNQEDVLKIHVKQYTPKREGPVPDDAITFIATHGVGLPKELYEPLWDELLDQASGFHIRAIWMADVASMNQSGIHNEDKLSMDCSWMDHARDLLLMINHFRDQMPRPLVGIGHSFGGNIITNLAYLHPRLFTTLLLLDPLIQLSPPSLGFGTDAPSAINYTLWRDDVWPSREVAIRANRAIMQGMDPRCLDRMTKHFFRDLPTPLYPDVEAIKALFGTTADSTTTPVTLTTPKYHELVAQIRQNFNARDPKTGRIEVPRDTHADMDPLVAYIPLYRPEPRSTFRRLETLRPSCLWVIAGATFLNIDEIREGVKICGSGIGGSGGVPDGRVREVVLPGFGHLMPFQEVKTVAETCIVWLQQEMDRFRQTERQWKEDRDGKSHLAVEENWYKVLKPIPSGRKKRNDKGKL.

Residues 58-246 (HGVGLPKELY…IKALFGTTAD (189 aa)) form an abhydrolase domain region. Position 60 (Val60) interacts with substrate. Residue Ser139 is the Nucleophile of the active site. Phe140 is a binding site for substrate. Residues Asp163 and His365 contribute to the active site.

The protein belongs to the AB hydrolase superfamily. MpaH hydrolase family. As to quaternary structure, homodimer.

The protein resides in the peroxisome matrix. It carries out the reaction mycophenolyl-CoA + H2O = mycophenolate + CoA + H(+). It functions in the pathway secondary metabolite biosynthesis; terpenoid biosynthesis. Type I acyl-CoA thioesterase; part of the gene cluster that mediates the biosynthesis of mycophenolic acid (MPA), the first isolated antibiotic natural product in the world obtained from a culture of Penicillium brevicompactum in 1893. MpaH' acts as a peroxisomal acyl-CoA hydrolase that converts MPA-CoA into the final product MPA. The first step of the pathway is the synthesis of 5-methylorsellinic acid (5MOA) by the cytosolic polyketide synthase mpaC. 5MOA is then converted to the phthalide compound 5,7-dihydroxy-4,6-dimethylphthalide (DHMP) by the endoplasmic reticulum-bound cytochrome P450 monooxygenase mpaDE. MpaDE first catalyzes hydroxylation of 5-MOA to 4,6-dihydroxy-2-(hydroxymethyl)-3-methylbenzoic acid (DHMB). MpaDE then acts as a lactone synthase that catalyzes the ring closure to convert DHMB into DHMP. The next step is the prenylation of DHMP by the Golgi apparatus-associated prenyltransferase mpaA to yield farnesyl-DHMP (FDHMP). The ER-bound oxygenase mpaB then mediates the oxidative cleavage the C19-C20 double bond in FDHMP to yield FDHMP-3C via a mycophenolic aldehyde intermediate. The O-methyltransferase mpaG catalyzes the methylation of FDHMP-3C to yield MFDHMP-3C. After the cytosolic methylation of FDHMP-3C, MFDHMP-3C enters into peroxisomes probably via free diffusion due to its low molecular weight. Upon a peroxisomal CoA ligation reaction, catalyzed by a beta-oxidation component enzyme acyl-CoA ligase ACL891, MFDHMP-3C-CoA would then be restricted to peroxisomes for the following beta-oxidation pathway steps. The peroxisomal beta-oxidation machinery than converts MFDHMP-3C-CoA into MPA_CoA, via a beta-oxidation chain-shortening process. Finally mpaH acts as a peroxisomal acyl-CoA hydrolase with high substrate specificity toward MPA-CoA to release the final product MPA. The chain is Type I acyl-CoA thioesterase mpaH' from Penicillium brevicompactum.